Reading from the N-terminus, the 356-residue chain is tRNA N6-adenosine threonylcarbamoyltransferase (356 aa).

Residues His-115 and His-119 each coordinate Fe cation. Substrate-binding positions include Leu-138 to Gly-142, Asp-171, Gly-184, and Asn-283. Position 311 (Asp-311) interacts with Fe cation.

Belongs to the KAE1 / TsaD family. It depends on Fe(2+) as a cofactor.

The protein resides in the cytoplasm. It catalyses the reaction L-threonylcarbamoyladenylate + adenosine(37) in tRNA = N(6)-L-threonylcarbamoyladenosine(37) in tRNA + AMP + H(+). In terms of biological role, required for the formation of a threonylcarbamoyl group on adenosine at position 37 (t(6)A37) in tRNAs that read codons beginning with adenine. Is involved in the transfer of the threonylcarbamoyl moiety of threonylcarbamoyl-AMP (TC-AMP) to the N6 group of A37, together with TsaE and TsaB. TsaD likely plays a direct catalytic role in this reaction. The protein is tRNA N6-adenosine threonylcarbamoyltransferase of Prochlorococcus marinus (strain MIT 9303).